The primary structure comprises 274 residues: Orotidine 5'-phosphate decarboxylase (274 aa).

Catalysis depends on Lys-95, which acts as the Proton donor.

The protein belongs to the OMP decarboxylase family. Type 2 subfamily.

The catalysed reaction is orotidine 5'-phosphate + H(+) = UMP + CO2. Its pathway is pyrimidine metabolism; UMP biosynthesis via de novo pathway; UMP from orotate: step 2/2. The chain is Orotidine 5'-phosphate decarboxylase from Variovorax paradoxus (strain S110).